We begin with the raw amino-acid sequence, 540 residues long: MAHDPGRVLIFDTTLRDGEQSPGASLNLEEKLAIAQQLARLGVDVIEAGFPFASPGDFNAVQRIAQQVGGEQGPIICGLARASRGDIKACADAVAPAPRRRIHTFIATSDIHLEHKLRKSRQEVLAIVPEMVAYARSLVDDVEFSCEDAGRSDPEFLYAVIEAAINAGASTINIPDTVGYTTPAEFGALIAGIDQHVPNISEAVLSVHGHNDLGLAVANFLEAVKNGARQLECTINGIGERAGNAALEELVMALHVRRRYFNPFFGRAEDSPTPLTGVRTEEITKTSRLVSNLTGMVVQPNKAIVGANAFAHESGIHQDGVLKNRLTYEIVDARTVGLTDNRISLGKLSGRSAVRARLEELGYDLSREDLDDAFARFKELADRKRDITDRDLEAIVSEQVQQPDARYQLKLVQVSCGSSLQPTATVTLLDEEGQEQSEAAIGTGPVDAVCRALNALAGEPNELVEFSVKSVTEGIDAMGEVTIRLRRDGQLFSGHAADTDVVVAAAQAFVNALNRLVAGSLNPTLHPQRDATPLDASPTL.

The region spanning 8–269 (VLIFDTTLRD…YFNPFFGRAE (262 aa)) is the Pyruvate carboxyltransferase domain. Mn(2+) is bound by residues Asp-17, His-208, His-210, and Asn-244. The regulatory domain stretch occupies residues 408–540 (QLKLVQVSCG…ATPLDASPTL (133 aa)).

Belongs to the alpha-IPM synthase/homocitrate synthase family. LeuA type 1 subfamily. Homodimer. The cofactor is Mn(2+).

Its subcellular location is the cytoplasm. The catalysed reaction is 3-methyl-2-oxobutanoate + acetyl-CoA + H2O = (2S)-2-isopropylmalate + CoA + H(+). Its pathway is amino-acid biosynthesis; L-leucine biosynthesis; L-leucine from 3-methyl-2-oxobutanoate: step 1/4. Its function is as follows. Catalyzes the condensation of the acetyl group of acetyl-CoA with 3-methyl-2-oxobutanoate (2-ketoisovalerate) to form 3-carboxy-3-hydroxy-4-methylpentanoate (2-isopropylmalate). This is 2-isopropylmalate synthase from Synechococcus sp. (strain WH7803).